A 672-amino-acid chain; its full sequence is Spermatid perinuclear RNA-binding protein (672 aa).

The DZF domain occupies 5–362 (RSFANDDRHV…ALKRPFEDGV (358 aa)). The disordered stretch occupies residues 348–370 (GTGSSALKRPFEDGVGDDKDPNK). The span at 356–370 (RPFEDGVGDDKDPNK) shows a compositional bias: basic and acidic residues. Residues 386–452 (DLMNALMRLN…AVKVLQAMGY (67 aa)) form the DRBM 1 domain. Residues 463–494 (VSSDEKSDNEGKNETVSSISSNNTGNSTADTS) are disordered. A compositionally biased stretch (basic and acidic residues) spans 465-475 (SDEKSDNEGKN). Low complexity predominate over residues 477–490 (TVSSISSNNTGNST). The 67-residue stretch at 509 to 575 (SGKNPVMELN…ALAALEKLFS (67 aa)) folds into the DRBM 2 domain.

It is found in the cytoplasm. Functionally, may be involved in normal spermatogenesis and sperm function. Binds to double-stranded DNA and RNA. This chain is Spermatid perinuclear RNA-binding protein (STRBP), found in Gallus gallus (Chicken).